We begin with the raw amino-acid sequence, 164 residues long: Glycine cleavage system H protein, mitochondrial (164 aa).

A mitochondrion-targeting transit peptide spans 1–39 (MAWLVLRRLGPVLAPRCPRLSLRPQVPAVRRLGTGSLLL). The Lipoyl-binding domain maps to 57–139 (IGTVGISNFA…YQDGWLIKMT (83 aa)). At lysine 98 the chain carries N6-lipoyllysine.

Belongs to the GcvH family. The glycine cleavage system is composed of four proteins: P (GLDC), T (GCST), L (DLD) and H (GCSH). Interacts with GLDC. (R)-lipoate is required as a cofactor.

It localises to the mitochondrion. Its function is as follows. The glycine cleavage system catalyzes the degradation of glycine. The H protein (GCSH) shuttles the methylamine group of glycine from the P protein (GLDC) to the T protein (GCST). Has a pivotal role in the lipoylation of enzymes involved in cellular energetics such as the mitochondrial dihydrolipoyllysine-residue acetyltransferase component of pyruvate dehydrogenase complex (DLAT), and the mitochondrial dihydrolipoyllysine-residue succinyltransferase component of 2-oxoglutarate dehydrogenase complex (DLST). The chain is Glycine cleavage system H protein, mitochondrial from Gallus gallus (Chicken).